The following is a 364-amino-acid chain: Dihydroorotate dehydrogenase (quinone) (364 aa).

FMN-binding positions include 62-66 (AGFDK) and threonine 86. Substrate is bound at residue lysine 66. 111–115 (NRMGF) lines the substrate pocket. FMN contacts are provided by asparagine 142 and asparagine 175. Residue asparagine 175 participates in substrate binding. The active-site Nucleophile is serine 178. Residue asparagine 180 coordinates substrate. 2 residues coordinate FMN: lysine 216 and threonine 244. 245-246 (NT) contributes to the substrate binding site. Residues glycine 267, glycine 296, and 317-318 (YT) contribute to the FMN site.

This sequence belongs to the dihydroorotate dehydrogenase family. Type 2 subfamily. In terms of assembly, monomer. FMN serves as cofactor.

It is found in the cell membrane. The enzyme catalyses (S)-dihydroorotate + a quinone = orotate + a quinol. Its pathway is pyrimidine metabolism; UMP biosynthesis via de novo pathway; orotate from (S)-dihydroorotate (quinone route): step 1/1. In terms of biological role, catalyzes the conversion of dihydroorotate to orotate with quinone as electron acceptor. In Anaeromyxobacter dehalogenans (strain 2CP-C), this protein is Dihydroorotate dehydrogenase (quinone).